Reading from the N-terminus, the 749-residue chain is MSFIDPYQHIIVEHHYSHKFTVVVLRATKVTKGTFGDMLDTPDPYVELFISSTPDSRKRTRHFNNDINPVWNETFEFILDPNQENILEITLMDANYVMDETLGTTTFPISSMKVGEKKQVPFIFNQVTEMILEMSLEVCSSPDLRFSMALCDQEKAFRQQRKENIKENMKKLLGPKNSEGLHSTRDVPVVAILGSGGGFRAMVGFSGVMKALYESGILDCATYIAGLSGSTWYMSTLYSHPDFPEKGPEEINKELMKNVSHNPLLLLTPQKIKRYVESLWRKKSSGQPVTFTDIFGMLIGETLIHNRMNTTLSSLKEKVNTGQCPLPLFTCLHVKPDVSELMFADWVEFSPFEIGMAKYGTFMAPDLFGSKFFMGTVVKKYEENPLHFLMGVWGSAFSILFNRVLGVSGSQSKGSTMEEELENITAKHIVSNDSSDSDDESQGPKGTEHEEAEREYQNDNQASWVQRMLMALVSDSALFNTREGRAGKVHNFMLGLNLNTSYPMSPLRDFTMQESLDEDELDAAVADPDEFEQIYEPLDVKSKKIHVVDSGLTFNLPYPLILRPQRGVDLIISFDFSARPSDSSPPFKELLLAEKWAKMNKLPFPKIDPYVFDREGLKECYVFKPKNPDVEKDCPTIIHFVLANINFRKYKAPGVPRETNEEKEIADFDIFDDPESPFSTFNFQYPNQAFKRLHDLMYFNTLNNIDVIKNAIVESIEYRRQNPSRCSVSLSSVEARRFFNKEFLSKPTA.

Residues 1–178 (MSFIDPYQHI…MKKLLGPKNS (178 aa)) form a phospholipid binding region. A Phosphoserine modification is found at S2. The region spanning 6-122 (PYQHIIVEHH…KVGEKKQVPF (117 aa)) is the C2 domain. D40, T41, D43, N65, D93, A94, and N95 together coordinate Ca(2+). The PLA2c domain maps to 140-740 (SSPDLRFSMA…SSVEARRFFN (601 aa)). S228 acts as the Nucleophile in catalysis. At T268 the chain carries Phosphothreonine. Residues 426-458 (AKHIVSNDSSDSDDESQGPKGTEHEEAEREYQN) form a disordered region. Phosphoserine is present on residues S434, S435, and S437. Residues 446–457 (GTEHEEAEREYQ) are compositionally biased toward basic and acidic residues. Position 505 is a phosphoserine; by MAPK (S505). S515 bears the Phosphoserine mark. K541 is covalently cross-linked (Glycyl lysine isopeptide (Lys-Gly) (interchain with G-Cter in SUMO2)). D549 acts as the Proton acceptor in catalysis. Residue K606 forms a Glycyl lysine isopeptide (Lys-Gly) (interchain with G-Cter in SUMO2) linkage. Residues S727 and S729 each carry the phosphoserine modification.

In terms of assembly, interacts with KAT5. Phosphorylated at both Ser-505 and Ser-727 in response to mitogenic stimuli. As to expression, detected in granulosa cells after stimulation with chorionic gonadotropin (at protein level).

The protein localises to the cytoplasm. Its subcellular location is the golgi apparatus membrane. It localises to the nucleus envelope. It catalyses the reaction a 1,2-diacyl-sn-glycero-3-phosphocholine + H2O = a 1-acyl-sn-glycero-3-phosphocholine + a fatty acid + H(+). The enzyme catalyses a 1-O-alkyl-2-acyl-sn-glycero-3-phosphocholine + H2O = a 1-O-alkyl-sn-glycero-3-phosphocholine + a fatty acid + H(+). The catalysed reaction is a 1-acyl-sn-glycero-3-phosphocholine + H2O = sn-glycerol 3-phosphocholine + a fatty acid + H(+). It carries out the reaction 1-hexadecanoyl-2-(5Z,8Z,11Z,14Z-eicosatetraenoyl)-sn-glycero-3-phosphocholine + H2O = 1-hexadecanoyl-sn-glycero-3-phosphocholine + (5Z,8Z,11Z,14Z)-eicosatetraenoate + H(+). It catalyses the reaction 1,2-di-(5Z,8Z,11Z,14Z-eicosatetraenoyl)-sn-glycero-3-phosphocholine + H2O = 1-(5Z,8Z,11Z,14Z-eicosatetraenoyl)-sn-glycero-3-phosphocholine + (5Z,8Z,11Z,14Z)-eicosatetraenoate + H(+). The enzyme catalyses 1-octadecanoyl-2-(5Z,8Z,11Z,14Z-eicosatetraenoyl)-sn-glycero-3-phosphocholine + H2O = 1-octadecanoyl-sn-glycero-3-phosphocholine + (5Z,8Z,11Z,14Z)-eicosatetraenoate + H(+). The catalysed reaction is 1-hexadecanoyl-2-(9Z,12Z-octadecadienoyl)-sn-glycero-3-phosphocholine + H2O = (9Z,12Z)-octadecadienoate + 1-hexadecanoyl-sn-glycero-3-phosphocholine + H(+). It carries out the reaction 1-octadecanoyl-2-(9Z,12Z,15Z-octadecatrienoyl)-sn-glycero-3-phosphocholine + H2O = (9Z,12Z,15Z)-octadecatrienoate + 1-octadecanoyl-sn-glycero-3-phosphocholine + H(+). It catalyses the reaction 1-(5Z,8Z,11Z,14Z-eicosatetraenoyl)-2-hexadecanoyl-sn-glycero-3-phosphocholine + H2O = 1-(5Z,8Z,11Z,14Z-eicosatetraenoyl)-sn-glycero-3-phosphocholine + hexadecanoate + H(+). The enzyme catalyses 1-O-hexadecyl-2-(5Z,8Z,11Z,14Z)-eicosatetraenoyl-sn-glycero-3-phosphocholine + H2O = 1-O-hexadecyl-sn-glycero-3-phosphocholine + (5Z,8Z,11Z,14Z)-eicosatetraenoate + H(+). The catalysed reaction is 1,2-di-(9Z-octadecenoyl)-sn-glycero-3-phospho-(1'-sn-glycerol) + H2O = 1-(9Z-octadecenoyl)-sn-glycero-3-phospho-(1'-sn-glycerol) + (9Z)-octadecenoate + H(+). It carries out the reaction 1-octadecanoyl-2-(5Z,8Z,11Z,14Z-eicosatetraenoyl)-sn-glycero-3-phosphate + H2O = 1-octadecanoyl-sn-glycero-3-phosphate + (5Z,8Z,11Z,14Z)-eicosatetraenoate + H(+). It catalyses the reaction 1-hexadecanoyl-sn-glycero-3-phosphocholine + H2O = sn-glycerol 3-phosphocholine + hexadecanoate + H(+). The enzyme catalyses 2-(prostaglandin E2)-sn-glycero-3-phosphoethanolamine + H2O = sn-glycero-3-phosphoethanolamine + prostaglandin E2 + H(+). The catalysed reaction is 2-[(15S)-hydroxy-(5Z,8Z,11Z,13E)-eicosatetraenoyl]-sn-glycero-3-phosphocholine + H2O = (15S)-hydroxy-(5Z,8Z,11Z,13E)-eicosatetraenoate + sn-glycerol 3-phosphocholine + H(+). It carries out the reaction 2-[(15R)-hydroxy-(5Z,8Z,11Z,13E)-eicosatetraenoyl]-sn-glycero-3-phosphocholine + H2O = (15R)-hydroxy-(5Z,8Z,11Z,13E)-eicosatetraenoate + sn-glycerol 3-phosphocholine + H(+). It catalyses the reaction 2-(prostaglandin E2)-sn-glycero-3-phosphocholine + H2O = prostaglandin E2 + sn-glycerol 3-phosphocholine + H(+). The enzyme catalyses 2-[(11R)-hydroxy-(5Z,8Z,12E,14Z)-eicosatetraenoyl]-sn-glycero-3-phosphocholine + H2O = (11R)-hydroxy-(5Z,8Z,12E,14Z)-eicosatetraenoate + sn-glycerol 3-phosphocholine + H(+). The catalysed reaction is 1-(5Z,8Z,11Z,14Z-eicosatetraenoyl)-2-O-hexadecyl-sn-glycero-3-phosphocholine + H2O = 2-O-hexadecyl-sn-glycero-3-phosphocholine + (5Z,8Z,11Z,14Z)-eicosatetraenoate + H(+). It carries out the reaction 1-octadecanoyl-2-(5Z,8Z,11Z,14Z-eicosatetraenoyl)-sn-glycero-3-phosphocholine + glycerol = 1-(5Z,8Z,11Z,14Z-eicosatetraenoyl)-glycerol + 1-octadecanoyl-sn-glycero-3-phosphocholine. It catalyses the reaction 1-octadecanoyl-2-(9Z,12Z,15Z-octadecatrienoyl)-sn-glycero-3-phosphocholine + glycerol = 1-(9Z,12Z,15Z-octadecatrienoyl)-glycerol + 1-octadecanoyl-sn-glycero-3-phosphocholine. It participates in membrane lipid metabolism; glycerophospholipid metabolism. The protein operates within lipid metabolism; arachidonate metabolism. It functions in the pathway lipid metabolism; prostaglandin biosynthesis. Its pathway is lipid metabolism; leukotriene B4 biosynthesis. Its activity is regulated as follows. Activated by cytosolic calcium, which is necessary for binding to membrane lipids. Activated by phosphorylation in response to mitogenic stimuli. Has primarily calcium-dependent phospholipase and lysophospholipase activities, with a major role in membrane lipid remodeling and biosynthesis of lipid mediators of the inflammatory response. Plays an important role in embryo implantation and parturition through its ability to trigger prostanoid production. Preferentially hydrolyzes the ester bond of the fatty acyl group attached at sn-2 position of phospholipids (phospholipase A2 activity). Selectively hydrolyzes sn-2 arachidonoyl group from membrane phospholipids, providing the precursor for eicosanoid biosynthesis via the cyclooxygenase pathway. In an alternative pathway of eicosanoid biosynthesis, hydrolyzes sn-2 fatty acyl chain of eicosanoid lysophopholipids to release free bioactive eicosanoids. Hydrolyzes the ester bond of the fatty acyl group attached at sn-1 position of phospholipids (phospholipase A1 activity) only if an ether linkage rather than an ester linkage is present at the sn-2 position. This hydrolysis is not stereospecific. Has calcium-independent phospholipase A2 and lysophospholipase activities in the presence of phosphoinositides. Has O-acyltransferase activity. Catalyzes the transfer of fatty acyl chains from phospholipids to a primary hydroxyl group of glycerol (sn-1 or sn-3), potentially contributing to monoacylglycerol synthesis. This chain is Cytosolic phospholipase A2 (PLA2G4A), found in Bos taurus (Bovine).